A 994-amino-acid chain; its full sequence is Regulator of telomere elongation helicase 1 homolog (994 aa).

In terms of domain architecture, Helicase ATP-binding spans 7 to 316 (AGIPVHFPFE…DDLMLLKEML (310 aa)). Position 42-49 (42-49 (SPTGTGKT)) interacts with ATP. [4Fe-4S] cluster-binding residues include cysteine 146, cysteine 164, cysteine 173, and cysteine 209. A DEAH box motif is present at residues 252–255 (DEAH). The tract at residues 861 to 887 (SSGLVKIHKRERSSPPGSSQSSSQTAK) is disordered. Positions 874–884 (SPPGSSQSSSQ) are enriched in low complexity.

Belongs to the helicase family. RAD3/XPD subfamily.

It localises to the nucleus. The enzyme catalyses ATP + H2O = ADP + phosphate + H(+). Its function is as follows. A probable ATP-dependent DNA helicase implicated in DNA repair and the maintenance of genomic stability. Acts as an anti-recombinase to counteract toxic recombination and limit crossover during meiosis. Regulates meiotic recombination and crossover homeostasis by physically dissociating strand invasion events and thereby promotes noncrossover repair by meiotic synthesis dependent strand annealing (SDSA) as well as disassembly of D loop recombination intermediates. This chain is Regulator of telomere elongation helicase 1 homolog, found in Drosophila ananassae (Fruit fly).